Consider the following 273-residue polypeptide: Cysteine protease S273R (273 aa).

Catalysis depends on residues H168 and N187. Residue Q226 coordinates substrate. C232 serves as the catalytic Nucleophile.

It belongs to the peptidase C63 family.

Its subcellular location is the host cytoplasm. It localises to the virion. Functionally, cysteine protease that plays several role during infection including processing of the structural polyprotein or inhibition of the host immune response. Catalyzes the maturation of the pp220 and pp62 polyprotein precursors into core-shell proteins. Plays a role in the disruption of host pyroptosis via specific cleavage of gasdermin D/GSDMD. In addition, strongly decreases the host cGAS-STING signaling by targeting IKBKE via its enzymatic activity. Also impairs host FOXJ1-mediated antiviral effect via degradation of FOXJ1. The chain is Cysteine protease S273R from African swine fever virus (isolate Tick/Malawi/Lil 20-1/1983) (ASFV).